Reading from the N-terminus, the 118-residue chain is Large ribosomal subunit protein bL19 (118 aa).

This sequence belongs to the bacterial ribosomal protein bL19 family.

In terms of biological role, this protein is located at the 30S-50S ribosomal subunit interface and may play a role in the structure and function of the aminoacyl-tRNA binding site. In Helicobacter pylori (strain P12), this protein is Large ribosomal subunit protein bL19.